A 269-amino-acid chain; its full sequence is Ethylene-responsive transcription factor ERN1 (269 aa).

The span at 1–15 (MEIQFQQPNLQQHQK) shows a compositional bias: polar residues. 2 disordered regions span residues 1–36 (MEIQ…NKFV) and 128–157 (DVPA…LSSG). The segment at residues 34–91 (KFVGVRQRPSGRWVAEIKDTTQKIRMWLGTFETAEEAARAYDEAACLLRGSNTRTNFI) is a DNA-binding region (AP2/ERF). Residues 128–146 (DVPAPSASTTSTSSNTSNS) show a composition bias toward low complexity.

This sequence belongs to the AP2/ERF transcription factor family. ERF subfamily.

It localises to the nucleus. Functionally, transcription factor involved in the symbiotic nodule signaling pathway in response to rhizobial stimulation. Functions as a transcriptional regulator required for root infection by symbiotic rhizobia, infection thread (IT) formation, and nodule development. May coordinate these processes. Functions downstream of the CCAMK-CYCLOPS complex. Probably not involved in arbuscular mycorrhizal (AM) symbiosis. The polypeptide is Ethylene-responsive transcription factor ERN1 (Lotus japonicus (Lotus corniculatus var. japonicus)).